The primary structure comprises 487 residues: ATP synthase subunit beta (487 aa).

An ATP-binding site is contributed by 164-171; the sequence is GGAGVGKT.

This sequence belongs to the ATPase alpha/beta chains family. F-type ATPases have 2 components, CF(1) - the catalytic core - and CF(0) - the membrane proton channel. CF(1) has five subunits: alpha(3), beta(3), gamma(1), delta(1), epsilon(1). CF(0) has four main subunits: a(1), b(1), b'(1) and c(9-12).

It localises to the cellular thylakoid membrane. The enzyme catalyses ATP + H2O + 4 H(+)(in) = ADP + phosphate + 5 H(+)(out). Functionally, produces ATP from ADP in the presence of a proton gradient across the membrane. The catalytic sites are hosted primarily by the beta subunits. This is ATP synthase subunit beta from Synechococcus sp. (strain CC9311).